The primary structure comprises 432 residues: Solute carrier family 35 member F5 (432 aa).

Positions 1 to 33 (MFLPSTTNHSSAPLQKHLCLFCTFWALLFGSHG) are cleaved as a signal peptide. Phosphoserine is present on serine 116. 8 helical membrane-spanning segments follow: residues 152 to 172 (ISFF…EALS), 177 to 197 (AIVN…AAVF), 205 to 225 (FTLS…LVNL), 236 to 256 (TIGS…IVMI), 270 to 290 (MFFG…FFLL), 304 to 324 (VVLM…EFLW), 329 to 349 (FLTS…LSII), and 361 to 381 (WLFF…TLLC). One can recognise an EamA domain in the interval 161 to 225 (FLANLSYQEA…SIGGVVLVNL (65 aa)).

The protein belongs to the SLC35F solute transporter family.

Its subcellular location is the membrane. Functionally, putative solute transporter. This chain is Solute carrier family 35 member F5 (SLC35F5), found in Macaca fascicularis (Crab-eating macaque).